The primary structure comprises 1135 residues: MAANEKMEVTVKTLDSQTRTFTVETEISVKDFKAHISSDVGISPEKQRLIYQGRVLQEDKKLKEYNVDGKVIHLVERAPPQTQPSTGGPSTSSSTSPTSSNAAPVPGAPERNGNSYVMVGTFNLPHVMSGLVRQQRPSVSTVNGNDGSTLDVHINLDQQLPVQSEPRVRLVLAQHILQDIQRILDRLEGQAVNEQAAEPMDTAESEGEASSRETLPQTTQNTDGQSNTTPTSHPSPSEYVEVLQSLSRVEERLAPFMQRYREILSSATSDAYENQEEREQSQRIINLVGESLRLLGNALVAVSDLRCNLSSASPRHLHVVRPMSHYSGPMLLQQAAIPIQINVGTTVTATGNGTHAGHMPSDGNAAQPPSTNTSEPQRPNTENQPPSNGERPASDAPPTSVPHPHPRVIRITHQTVEPVMMMHMNIQDSASGGPTTIPPPTAGHGGSAHIHMPGLPPEFMQAISHQITQQAMAAASGQQIPGFQAPPRFVFTRPAAPSFQFQPGTATTPPGPGGATTTVPGATVGPAGNASLAQMISGLVGQLLMHPVVVAQGGSSTSSSTSSSTFTSTSSSASSSSSTDTTSTTTTSSTANPTVSSVPSSQPPPGTDQHLSQLLGSLLGTASSGMSNITMGSPSITVTVPGMPAFLQGVTDILQATQTVPVSTAPTQSASQAPPPSSPPPPPAHSSPPPAAAPESLPPEFFTSVVQGVLSSMLGSLSAADQSGTESIAAFIQRLSGTHNIFQPDAEGPGGFFGDLLTLICHNFSLVDMVMLLHGHSQPLQNLQPQLRSFFLQEYLHQVDPTPNNIQMASRNLTNGLEEYIRESFASVTVRDDVDITRTNIEFLQDQFNRITTHILHCADSTFGQRLLEMCNQSLFEWLALNLYCLRGDQNALTSVINERIRRLSLDVSPVLVSWVTSVLSLRLQVLLGQMPVTEGEIQRHVRRVGDAPQVPEPSSQEQPMETMPVDCQNGAASPVLATHSGGVLFLPPQSSVPTICPDSDHPTQEDGGSEQWAASVPPEWVPVIRQDMQNQRKIKQQPPLSDAYLSGMPAKRRKTMQGEGPHLSLSEAVSRAMKATGAKPESSAECVRRELDNSEAQGRYREQLCQDIQKTLQDNESYSAQRFPNTQRAFRGDP.

The 76-residue stretch at 7–82 (MEVTVKTLDS…HLVERAPPQT (76 aa)) folds into the Ubiquitin-like domain. 8 disordered regions span residues 76–114 (ERAP…RNGN), 194–238 (EQAA…SPSE), 350–407 (TGNG…PHPR), 498–522 (SFQF…VPGA), 552–612 (QGGS…QHLS), 661–698 (PVST…ESLP), 1075–1099 (KATG…EAQG), and 1116–1135 (NESY…RGDP). A compositionally biased stretch (low complexity) spans 79-100 (PPQTQPSTGGPSTSSSTSPTSS). The segment covering 212 to 227 (RETLPQTTQNTDGQSN) has biased composition (polar residues). Residues 228-237 (TTPTSHPSPS) are compositionally biased toward low complexity. Residues 367–387 (QPPSTNTSEPQRPNTENQPPS) show a composition bias toward polar residues. Composition is skewed to low complexity over residues 555 to 600 (SSTS…SVPS) and 663 to 672 (STAPTQSASQ). Over residues 673-692 (APPPSSPPPPPAHSSPPPAA) the composition is skewed to pro residues. Over residues 1087-1099 (CVRRELDNSEAQG) the composition is skewed to basic and acidic residues. Over residues 1116–1129 (NESYSAQRFPNTQR) the composition is skewed to polar residues.

In terms of assembly, component of the bag6/bat3 complex.

The protein resides in the cytoplasm. Its subcellular location is the cytosol. It is found in the nucleus. The protein localises to the secreted. It localises to the extracellular exosome. Its function is as follows. ATP-independent molecular chaperone preventing the aggregation of misfolded and hydrophobic patches-containing proteins. Functions as part of a cytosolic protein quality control complex, the bag6/bat3 complex, which maintains these client proteins in a soluble state and participates in their proper delivery to the endoplasmic reticulum or alternatively can promote their sorting to the proteasome where they undergo degradation. The bag6/bat3 complex is involved in the post-translational delivery of tail-anchored/type II transmembrane proteins to the endoplasmic reticulum membrane. Similarly, the bag6/bat3 complex also functions as a sorting platform for proteins of the secretory pathway that are mislocalized to the cytosol either delivering them to the proteasome for degradation or to the endoplasmic reticulum. The bag6/bat3 complex also plays a role in the endoplasmic reticulum-associated degradation (ERAD), a quality control mechanism that eliminates unwanted proteins of the endoplasmic reticulum through their retrotranslocation to the cytosol and their targeting to the proteasome. It maintains these retrotranslocated proteins in an unfolded yet soluble state condition in the cytosol to ensure their proper delivery to the proteasome. Also required for selective ubiquitin-mediated degradation of defective nascent chain polypeptides by the proteasome. Also involved in endoplasmic reticulum stress-induced pre-emptive quality control, a mechanism that selectively attenuates the translocation of newly synthesized proteins into the endoplasmic reticulum and reroutes them to the cytosol for proteasomal degradation. May ensure the proper degradation of these proteins and thereby protects the endoplasmic reticulum from protein overload upon stress. By stabilizing a large spectrum of proteins, may indirectly affect different biological processes including apoptosis. By controlling the steady-state expression of the IGF1R receptor, indirectly regulates the insulin-like growth factor receptor signaling pathway. When nuclear, may also act as a component of some chromatin regulator complex. This Xenopus laevis (African clawed frog) protein is Large proline-rich protein bag6-A.